A 235-amino-acid polypeptide reads, in one-letter code: Probable pyridoxal 5'-phosphate synthase subunit PDX1 (235 aa).

Residue lysine 16 is the Schiff-base intermediate with D-ribose 5-phosphate of the active site. Arginine 104 contributes to the D-glyceraldehyde 3-phosphate binding site. D-ribose 5-phosphate contacts are provided by residues glycine 153 and 174–175 (GS).

This sequence belongs to the PdxS/SNZ family.

It catalyses the reaction aldehydo-D-ribose 5-phosphate + D-glyceraldehyde 3-phosphate + L-glutamine = pyridoxal 5'-phosphate + L-glutamate + phosphate + 3 H2O + H(+). Its pathway is cofactor biosynthesis; pyridoxal 5'-phosphate biosynthesis. In terms of biological role, catalyzes the formation of pyridoxal 5'-phosphate from ribose 5-phosphate (RBP), glyceraldehyde 3-phosphate (G3P) and ammonia. The ammonia is provided by PDX2. Can also use ribulose 5-phosphate and dihydroxyacetone phosphate as substrates, resulting from enzyme-catalyzed isomerization of RBP and G3P, respectively. Also plays an indirect role in resistance to singlet oxygen-generating photosensitizers. The sequence is that of Probable pyridoxal 5'-phosphate synthase subunit PDX1 from Stellaria longipes (Longstalk starwort).